Consider the following 360-residue polypeptide: Histidinol-phosphate aminotransferase (360 aa).

An N6-(pyridoxal phosphate)lysine modification is found at Lys-218.

The protein belongs to the class-II pyridoxal-phosphate-dependent aminotransferase family. Histidinol-phosphate aminotransferase subfamily. In terms of assembly, homodimer. Requires pyridoxal 5'-phosphate as cofactor.

The enzyme catalyses L-histidinol phosphate + 2-oxoglutarate = 3-(imidazol-4-yl)-2-oxopropyl phosphate + L-glutamate. The protein operates within amino-acid biosynthesis; L-histidine biosynthesis; L-histidine from 5-phospho-alpha-D-ribose 1-diphosphate: step 7/9. This Chlorobium phaeovibrioides (strain DSM 265 / 1930) (Prosthecochloris vibrioformis (strain DSM 265)) protein is Histidinol-phosphate aminotransferase.